We begin with the raw amino-acid sequence, 176 residues long: Endoribonuclease YbeY (176 aa).

Residues His-138, His-142, and His-148 each coordinate Zn(2+).

The protein belongs to the endoribonuclease YbeY family. The cofactor is Zn(2+).

The protein localises to the cytoplasm. Functionally, single strand-specific metallo-endoribonuclease involved in late-stage 70S ribosome quality control and in maturation of the 3' terminus of the 16S rRNA. In Trichormus variabilis (strain ATCC 29413 / PCC 7937) (Anabaena variabilis), this protein is Endoribonuclease YbeY.